Here is a 218-residue protein sequence, read N- to C-terminus: Ras-related protein Rab-42 (218 aa).

Ala19, Gly21, Lys22, Thr23, and Thr46 together coordinate GTP. Residues Thr23, Thr46, and Asp70 each coordinate Mg(2+). Gly73, Lys130, Asp132, Val160, and Lys161 together coordinate GTP. S-geranylgeranyl cysteine attachment occurs at residues Cys216 and Cys218.

The protein belongs to the small GTPase superfamily. Rab family. It depends on Mg(2+) as a cofactor.

The protein localises to the membrane. The enzyme catalyses GTP + H2O = GDP + phosphate + H(+). With respect to regulation, regulated by guanine nucleotide exchange factors (GEFs) which promote the exchange of bound GDP for free GTP. Regulated by GTPase activating proteins (GAPs) which increase the GTP hydrolysis activity. Inhibited by GDP dissociation inhibitors (GDIs). Its function is as follows. The small GTPases Rab are key regulators of intracellular membrane trafficking, from the formation of transport vesicles to their fusion with membranes. Rabs cycle between an inactive GDP-bound form and an active GTP-bound form that is able to recruit to membranes different sets of downstream effectors directly responsible for vesicle formation, movement, tethering and fusion. The physiological function of RAB42 remains undefined. The sequence is that of Ras-related protein Rab-42 from Homo sapiens (Human).